Reading from the N-terminus, the 352-residue chain is Glycerol-1-phosphate dehydrogenase [NAD(P)+] (352 aa).

NAD(+) contacts are provided by residues 91 to 95 (GRVID) and 113 to 116 (TVAS). Aspartate 118 contributes to the substrate binding site. Residue serine 122 coordinates NAD(+). Position 169 (glutamate 169) interacts with substrate. Zn(2+)-binding residues include glutamate 169 and histidine 249. Substrate is bound at residue histidine 253. Histidine 269 is a binding site for Zn(2+).

This sequence belongs to the glycerol-1-phosphate dehydrogenase family. As to quaternary structure, homodimer. Requires Zn(2+) as cofactor.

The protein resides in the cytoplasm. It catalyses the reaction sn-glycerol 1-phosphate + NAD(+) = dihydroxyacetone phosphate + NADH + H(+). The enzyme catalyses sn-glycerol 1-phosphate + NADP(+) = dihydroxyacetone phosphate + NADPH + H(+). It participates in membrane lipid metabolism; glycerophospholipid metabolism. In terms of biological role, catalyzes the NAD(P)H-dependent reduction of dihydroxyacetonephosphate (DHAP or glycerone phosphate) to glycerol 1-phosphate (G1P). The G1P thus generated is used as the glycerophosphate backbone of phospholipids in the cellular membranes of Archaea. The protein is Glycerol-1-phosphate dehydrogenase [NAD(P)+] of Caldivirga maquilingensis (strain ATCC 700844 / DSM 13496 / JCM 10307 / IC-167).